A 157-amino-acid polypeptide reads, in one-letter code: 17.8 kDa class I heat shock protein (157 aa).

Positions 43 to 157 constitute a sHSP domain; it reads ETAAFVNTHI…PEVKAIDISG (115 aa).

Belongs to the small heat shock protein (HSP20) family. Forms oligomeric structures.

Its subcellular location is the cytoplasm. The sequence is that of 17.8 kDa class I heat shock protein from Daucus carota (Wild carrot).